The chain runs to 89 residues: Small ribosomal subunit protein uS15 (89 aa).

The segment at 1–25 (MSLSAEQKGEIVKKHARTASDTGSP) is disordered.

Belongs to the universal ribosomal protein uS15 family. Part of the 30S ribosomal subunit. Forms a bridge to the 50S subunit in the 70S ribosome, contacting the 23S rRNA.

Functionally, one of the primary rRNA binding proteins, it binds directly to 16S rRNA where it helps nucleate assembly of the platform of the 30S subunit by binding and bridging several RNA helices of the 16S rRNA. Its function is as follows. Forms an intersubunit bridge (bridge B4) with the 23S rRNA of the 50S subunit in the ribosome. In Alkalilimnicola ehrlichii (strain ATCC BAA-1101 / DSM 17681 / MLHE-1), this protein is Small ribosomal subunit protein uS15.